A 1024-amino-acid chain; its full sequence is Beta-galactosidase (1024 aa).

The substrate site is built by Asn-103 and Asp-202. Asp-202 serves as a coordination point for Na(+). Mg(2+) contacts are provided by Glu-417, His-419, and Glu-462. Residues Glu-462 and 538–541 (EYAH) each bind substrate. Catalysis depends on Glu-462, which acts as the Proton donor. Glu-538 functions as the Nucleophile in the catalytic mechanism. Asn-598 lines the Mg(2+) pocket. Residues Phe-602 and Asn-605 each contribute to the Na(+) site. Substrate-binding residues include Asn-605 and Trp-1000.

The protein belongs to the glycosyl hydrolase 2 family. Homotetramer. It depends on Mg(2+) as a cofactor. Na(+) is required as a cofactor.

It carries out the reaction Hydrolysis of terminal non-reducing beta-D-galactose residues in beta-D-galactosides.. This is Beta-galactosidase from Shigella dysenteriae serotype 1 (strain Sd197).